A 105-amino-acid chain; its full sequence is Large ribosomal subunit protein uL24 (105 aa).

A disordered region spans residues 75-105; sequence DSDGNPTRVGYRTDEESGKRVRISRKNGKDI. Residues 94 to 105 are compositionally biased toward basic residues; that stretch reads RVRISRKNGKDI.

It belongs to the universal ribosomal protein uL24 family. In terms of assembly, part of the 50S ribosomal subunit.

In terms of biological role, one of two assembly initiator proteins, it binds directly to the 5'-end of the 23S rRNA, where it nucleates assembly of the 50S subunit. One of the proteins that surrounds the polypeptide exit tunnel on the outside of the subunit. The chain is Large ribosomal subunit protein uL24 from Rhodococcus jostii (strain RHA1).